A 156-amino-acid chain; its full sequence is Ribonuclease pancreatic (156 aa).

An N-terminal signal peptide occupies residues 1 to 28; the sequence is MALEKSLVLLPLFVLMLLVLGWVQPSLG. Residues Lys-35 and Arg-38 each contribute to the substrate site. Catalysis depends on His-40, which acts as the Proton acceptor. 2 N-linked (GlcNAc...) asparagine glycosylation sites follow: Asn-50 and Asn-62. 4 cysteine pairs are disulfide-bonded: Cys-54–Cys-112, Cys-68–Cys-123, Cys-86–Cys-138, and Cys-93–Cys-100. Substrate contacts are provided by residues 69-73 and Lys-94; that span reads KPVNT. Asn-104 carries an N-linked (GlcNAc...) asparagine glycan. Arg-113 serves as a coordination point for substrate. An N-linked (GlcNAc...) asparagine glycan is attached at Asn-116. The active-site Proton donor is His-147.

The protein belongs to the pancreatic ribonuclease family. As to quaternary structure, monomer. Interacts with and forms tight 1:1 complexes with RNH1. Dimerization of two such complexes may occur. Interaction with RNH1 inhibits this protein.

It is found in the secreted. It carries out the reaction an [RNA] containing cytidine + H2O = an [RNA]-3'-cytidine-3'-phosphate + a 5'-hydroxy-ribonucleotide-3'-[RNA].. It catalyses the reaction an [RNA] containing uridine + H2O = an [RNA]-3'-uridine-3'-phosphate + a 5'-hydroxy-ribonucleotide-3'-[RNA].. Functionally, endonuclease that catalyzes the cleavage of RNA on the 3' side of pyrimidine nucleotides. Acts on single-stranded and double-stranded RNA. The polypeptide is Ribonuclease pancreatic (RNASE1) (Nomascus leucogenys (Northern white-cheeked gibbon)).